The following is a 72-amino-acid chain: Translation initiation factor IF-1 (72 aa).

The region spanning 1 to 72 (MAKEDNFELE…SKGRITYRAR (72 aa)) is the S1-like domain.

This sequence belongs to the IF-1 family. In terms of assembly, component of the 30S ribosomal translation pre-initiation complex which assembles on the 30S ribosome in the order IF-2 and IF-3, IF-1 and N-formylmethionyl-tRNA(fMet); mRNA recruitment can occur at any time during PIC assembly.

It is found in the cytoplasm. Functionally, one of the essential components for the initiation of protein synthesis. Stabilizes the binding of IF-2 and IF-3 on the 30S subunit to which N-formylmethionyl-tRNA(fMet) subsequently binds. Helps modulate mRNA selection, yielding the 30S pre-initiation complex (PIC). Upon addition of the 50S ribosomal subunit IF-1, IF-2 and IF-3 are released leaving the mature 70S translation initiation complex. This Saccharophagus degradans (strain 2-40 / ATCC 43961 / DSM 17024) protein is Translation initiation factor IF-1.